Reading from the N-terminus, the 527-residue chain is Ribonuclease Y 2 (527 aa).

A helical membrane pass occupies residues 2–22 (IAMIATAIIGIVAGGGLGWAL). The region spanning 339 to 432 (QYFHCGEVGW…VIAADAVSGA (94 aa)) is the HD domain.

The protein belongs to the RNase Y family.

The protein resides in the cell membrane. Endoribonuclease that initiates mRNA decay. The polypeptide is Ribonuclease Y 2 (Bdellovibrio bacteriovorus (strain ATCC 15356 / DSM 50701 / NCIMB 9529 / HD100)).